The sequence spans 274 residues: Copper chaperone for superoxide dismutase (274 aa).

One can recognise an HMA domain in the interval 11 to 74 (LCTLEFAVQM…LLEGTGRQAV (64 aa)). Cu cation contacts are provided by cysteine 22 and cysteine 25. Lysine 76 participates in a covalent cross-link: Glycyl lysine isopeptide (Lys-Gly) (interchain with G-Cter in ubiquitin). Residues 88-234 (AAVAILGGPG…LACGIIARSA (147 aa)) form a superoxide dismutase-like region. An intrachain disulfide couples cysteine 141 to cysteine 227. Zn(2+)-binding residues include histidine 147, histidine 155, histidine 164, and aspartate 167. Glycyl lysine isopeptide (Lys-Gly) (interchain with G-Cter in ubiquitin) cross-links involve residues lysine 189, lysine 216, and lysine 241. Residues cysteine 244 and cysteine 246 each contribute to the Cu cation site. Serine 267 carries the post-translational modification Phosphoserine.

In the C-terminal section; belongs to the Cu-Zn superoxide dismutase family. As to quaternary structure, homodimer, and heterodimer with SOD1. Interacts with COMMD1. Interacts with XIAP/BIRC4. Interacts with SLC31A1(via C-terminal domain); this interaction is Cu(1+)-mediated. The heterodimer CCS:SOD1 interacts with SLC31A1; this heterotrimer is Cu(1+)-mediated and its maintenance is regulated through SOD1 activation. The cofactor is Cu(2+). Zn(2+) serves as cofactor. Ubiquitinion by XIAP/BIRC4 leads to enhancement of its chaperone activity toward its physiologic target, SOD1, rather than proteasomal degradation. XIAP/BIRC4 preferentially ubiquitinates at Lys-241. In terms of tissue distribution, ubiquitous.

The protein resides in the cytoplasm. Delivers copper to copper zinc superoxide dismutase (SOD1). In Homo sapiens (Human), this protein is Copper chaperone for superoxide dismutase.